The primary structure comprises 301 residues: Glycine--tRNA ligase alpha subunit (301 aa).

This sequence belongs to the class-II aminoacyl-tRNA synthetase family. As to quaternary structure, tetramer of two alpha and two beta subunits.

The protein resides in the cytoplasm. It carries out the reaction tRNA(Gly) + glycine + ATP = glycyl-tRNA(Gly) + AMP + diphosphate. The chain is Glycine--tRNA ligase alpha subunit from Nitrosospira multiformis (strain ATCC 25196 / NCIMB 11849 / C 71).